The following is a 122-amino-acid chain: Large ribosomal subunit protein uL18 (122 aa).

It belongs to the universal ribosomal protein uL18 family. Part of the 50S ribosomal subunit; part of the 5S rRNA/L5/L18/L25 subcomplex. Contacts the 5S and 23S rRNAs.

Functionally, this is one of the proteins that bind and probably mediate the attachment of the 5S RNA into the large ribosomal subunit, where it forms part of the central protuberance. This chain is Large ribosomal subunit protein uL18, found in Acetivibrio thermocellus (strain ATCC 27405 / DSM 1237 / JCM 9322 / NBRC 103400 / NCIMB 10682 / NRRL B-4536 / VPI 7372) (Clostridium thermocellum).